A 242-amino-acid chain; its full sequence is uncharacterized protein (242 aa).

Disordered regions lie at residues 43-70 (SRRS…TSKD) and 112-162 (RMSR…VTPR). A compositionally biased stretch (polar residues) spans 58-70 (QSVSGRKNSTSKD). 2 stretches are compositionally biased toward low complexity: residues 122 to 139 (ERAA…AGHA) and 147 to 162 (ADGA…VTPR).

This is an uncharacterized protein from Homo sapiens (Human).